Reading from the N-terminus, the 365-residue chain is Sulfate/thiosulfate import ATP-binding protein CysA (365 aa).

The region spanning 3 to 237 (IEIANIKKSF…PATRFVLEFM (235 aa)) is the ABC transporter domain. 35–42 (GPSGSGKT) is a binding site for ATP.

This sequence belongs to the ABC transporter superfamily. Sulfate/tungstate importer (TC 3.A.1.6) family. As to quaternary structure, the complex is composed of two ATP-binding proteins (CysA), two transmembrane proteins (CysT and CysW) and a solute-binding protein (CysP).

It localises to the cell inner membrane. It catalyses the reaction sulfate(out) + ATP + H2O = sulfate(in) + ADP + phosphate + H(+). The catalysed reaction is thiosulfate(out) + ATP + H2O = thiosulfate(in) + ADP + phosphate + H(+). Functionally, part of the ABC transporter complex CysAWTP involved in sulfate/thiosulfate import. Responsible for energy coupling to the transport system. The protein is Sulfate/thiosulfate import ATP-binding protein CysA of Shigella flexneri.